The primary structure comprises 761 residues: 52 kDa repressor of the inhibitor of the protein kinase (761 aa).

A THAP-type zinc finger spans residues 1–86; sequence MPNFCAAPNC…LRDNAIPTIF (86 aa). A compositionally biased stretch (basic and acidic residues) spans 116–132; that stretch reads QKKIDETSEQEQKHKET. A disordered region spans residues 116–149; the sequence is QKKIDETSEQEQKHKETNNSNAQNPSEEEGEGQD. Ser566 carries the phosphoserine modification.

In terms of assembly, interacts with DNAJC3, probably sequestring it.

Functionally, upstream regulator of interferon-induced serine/threonine protein kinase R (PKR). May block the PKR-inhibitory function of DNAJC3, resulting in restoration of kinase activity and suppression of cell growth. This is 52 kDa repressor of the inhibitor of the protein kinase from Homo sapiens (Human).